A 561-amino-acid polypeptide reads, in one-letter code: DISARM protein DrmB (561 aa).

The protein resides in the cytoplasm. Functionally, component of antiviral defense system DISARM (defense island system associated with restriction-modification), composed of DrmE, DrmA, DrmB, DrmC and DrmMII. DISARM is probably a multi-gene restriction module, this subunit has an unknown function. Expression of DISARM in B.subtilis (strain BEST7003) confers resistance to phages Nf, phi29, phi105, phi3T, SPO1, SPR and SPP1. Protection is over 10(7)-fold against phi3T, 10(4)-10(5)-fold against Nf, phi29, phi105 and SPR, 100-fold against SPO1 and 10-fold against SPP1. DISARM does not interfere with phage adsorption, but instead interferes with (phi3T) DNA replication early in its cycle, preventing replication, circularization and lysogeny and probably causes phage DNA degradation (DNA is degraded in SPP1-infected cells). This Bacillus paralicheniformis (strain ATCC 9945a / NCIMB 11709 / CD-2) protein is DISARM protein DrmB.